A 336-amino-acid polypeptide reads, in one-letter code: Methionyl-tRNA formyltransferase (336 aa).

112-115 lines the (6S)-5,6,7,8-tetrahydrofolate pocket; it reads SILP.

The protein belongs to the Fmt family.

The catalysed reaction is L-methionyl-tRNA(fMet) + (6R)-10-formyltetrahydrofolate = N-formyl-L-methionyl-tRNA(fMet) + (6S)-5,6,7,8-tetrahydrofolate + H(+). In terms of biological role, attaches a formyl group to the free amino group of methionyl-tRNA(fMet). The formyl group appears to play a dual role in the initiator identity of N-formylmethionyl-tRNA by promoting its recognition by IF2 and preventing the misappropriation of this tRNA by the elongation apparatus. This is Methionyl-tRNA formyltransferase from Trichodesmium erythraeum (strain IMS101).